A 600-amino-acid chain; its full sequence is Glutamine--fructose-6-phosphate aminotransferase [isomerizing] (600 aa).

Cys2 acts as the Nucleophile; for GATase activity in catalysis. The 216-residue stretch at 2–217 (CGIVGFIGEQ…DKEIVIVMKE (216 aa)) folds into the Glutamine amidotransferase type-2 domain. SIS domains lie at 283 to 422 (IRNA…AKGE) and 452 to 590 (LAKQ…VDKP). The active-site For Fru-6P isomerization activity is the Lys595.

Homodimer.

The protein resides in the cytoplasm. It catalyses the reaction D-fructose 6-phosphate + L-glutamine = D-glucosamine 6-phosphate + L-glutamate. Functionally, catalyzes the first step in hexosamine metabolism, converting fructose-6P into glucosamine-6P using glutamine as a nitrogen source. This is Glutamine--fructose-6-phosphate aminotransferase [isomerizing] from Bacillus anthracis.